The chain runs to 655 residues: p-hydroxybenzoic acid efflux pump subunit AaeB (655 aa).

Transmembrane regions (helical) follow at residues 13-33, 38-58, 69-89, 93-113, 121-141, 152-172, 370-390, 407-427, 431-451, 459-479, and 482-502; these read FAVK…HFQL, WAVL…GGEP, LRII…ISMI, LLMI…SSLV, WGLS…EPLL, EIVI…PRSI, LFWL…IAVV, FIYG…VIIP, QSML…GIEV, MGAL…TFHF, and FLDS…VILL.

It belongs to the aromatic acid exporter ArAE (TC 2.A.85) family.

It localises to the cell inner membrane. In terms of biological role, forms an efflux pump with AaeA. Could function as a metabolic relief valve, allowing to eliminate certain compounds when they accumulate to high levels in the cell. The sequence is that of p-hydroxybenzoic acid efflux pump subunit AaeB from Salmonella agona (strain SL483).